The following is a 702-amino-acid chain: Phosphatase and actin regulator 4 (702 aa).

Disordered stretches follow at residues 1-38 (MEDP…SKFS), 82-194 (GVLL…SSGG), and 222-363 (NLSV…PFPA). The stretch at 63–88 (EVLERKISMRKPREELVKRGVLLEDP) is one RPEL 1 repeat. Polar residues predominate over residues 106-120 (GHTTPIGNARSSSPV). 4 positions are modified to phosphoserine: S116, S118, S131, and S147. Residues 147 to 156 (STGSQPNSEA) are compositionally biased toward polar residues. Residues 163 to 173 (VPKPPLLPPKR) are compositionally biased toward pro residues. Residues 233–250 (TLPAAPASTNTTATPSLT) are compositionally biased toward low complexity. Phosphoserine is present on residues S270 and S291. Polar residues predominate over residues 301–318 (PSTSVPTLESAAAITTKT). S342 and S344 each carry phosphoserine. Residues 342 to 362 (SPSPPLPTHIPPEPPRTPPFP) show a composition bias toward pro residues. The residue at position 358 (T358) is a Phosphothreonine. The residue at position 427 (S427) is a Phosphoserine. Residue T432 is modified to Phosphothreonine. 3 positions are modified to phosphoserine: S443, S453, and S464. A disordered region spans residues 473 to 536 (KVPDDEEEEE…EEDEDESYQS (64 aa)). The segment covering 486–497 (PSTFSEETTPTS) has biased composition (low complexity). Acidic residues predominate over residues 508–518 (EEEEKESDSDS). Phosphoserine is present on residues S514, S516, S557, and S590. RPEL repeat units follow at residues 583–608 (NTLI…QPKN) and 621–646 (RRLT…RFNE). Positions 592–615 (RPTPEELEQRNILQPKNEADRQAE) are disordered. The residue at position 628 (S628) is a Phosphoserine.

This sequence belongs to the phosphatase and actin regulator family. In terms of assembly, binds PPP1CA and actin.

It is found in the cytoplasm. The protein localises to the cell projection. Its subcellular location is the lamellipodium. Regulator of protein phosphatase 1 (PP1) required for neural tube and optic fissure closure, and enteric neural crest cell (ENCCs) migration during development. Acts as an activator of PP1 by interacting with PPP1CA and preventing phosphorylation of PPP1CA at 'Thr-320'. During neural tube closure, localizes to the ventral neural tube and activates PP1, leading to down-regulate cell proliferation within cranial neural tissue and the neural retina. Also acts as a regulator of migration of enteric neural crest cells (ENCCs) by activating PP1, leading to dephosphorylation and subsequent activation of cofilin (COF1 or COF2) and repression of the integrin signaling through the RHO/ROCK pathway. This Pongo abelii (Sumatran orangutan) protein is Phosphatase and actin regulator 4 (PHACTR4).